A 494-amino-acid chain; its full sequence is Fumigaclavine B O-acetyltransferase easN (494 aa).

This sequence belongs to the fumigaclavine B O-acetyltransferase family. Monomer.

It carries out the reaction fumigaclavine B + acetyl-CoA = fumigaclavine A + CoA. It functions in the pathway alkaloid biosynthesis; ergot alkaloid biosynthesis. Fumigaclavine B O-acetyltransferase; part of the gene cluster that mediates the biosynthesis of fumiclavanine C, a fungal ergot alkaloid. DmaW catalyzes the first step of ergot alkaloid biosynthesis by condensing dimethylallyl diphosphate (DMAP) and tryptophan to form 4-dimethylallyl-L-tryptophan. The second step is catalyzed by the methyltransferase easF that methylates 4-dimethylallyl-L-tryptophan in the presence of S-adenosyl-L-methionine, resulting in the formation of 4-dimethylallyl-L-abrine. The catalase easC and the FAD-dependent oxidoreductase easE then transform 4-dimethylallyl-L-abrine to chanoclavine-I which is further oxidized by EasD in the presence of NAD(+), resulting in the formation of chanoclavine-I aldehyde. EasA reduces chanoclavine-I aldehyde to dihydrochanoclavine-I aldehyde that spontaneously dehydrates to form 6,8-dimethyl-6,7-didehydroergoline. EasG then catalyzes the reduction of 6,8-dimethyl-6,7-didehydroergoline to form festuclavine. Hydrolysis of festuclavine by easM then leads to the formation of fumigaclavine B which is in turn acetylated by easN to fumigaclavine A. Finally, easL catalyzes the conversion of fumigaclavine A into fumigaclavine C by attaching a dimethylallyl moiety to C-2 of the indole nucleus. The sequence is that of Fumigaclavine B O-acetyltransferase easN from Aspergillus fumigatus (strain ATCC MYA-4609 / CBS 101355 / FGSC A1100 / Af293) (Neosartorya fumigata).